A 188-amino-acid polypeptide reads, in one-letter code: Elongation factor P (188 aa).

Belongs to the elongation factor P family.

The protein localises to the cytoplasm. Its pathway is protein biosynthesis; polypeptide chain elongation. Its function is as follows. Involved in peptide bond synthesis. Stimulates efficient translation and peptide-bond synthesis on native or reconstituted 70S ribosomes in vitro. Probably functions indirectly by altering the affinity of the ribosome for aminoacyl-tRNA, thus increasing their reactivity as acceptors for peptidyl transferase. The protein is Elongation factor P of Aeromonas salmonicida (strain A449).